The following is a 451-amino-acid chain: Metalloprotease MJ0996 (451 aa).

This sequence belongs to the peptidase U62 family.

Probable metalloprotease. In Methanocaldococcus jannaschii (strain ATCC 43067 / DSM 2661 / JAL-1 / JCM 10045 / NBRC 100440) (Methanococcus jannaschii), this protein is Metalloprotease MJ0996.